Here is an 833-residue protein sequence, read N- to C-terminus: Leucine--tRNA ligase (833 aa).

The 'HIGH' region signature appears at 41–52 (PYPSGAGLHVGH). Residues 610-614 (KMSKS) carry the 'KMSKS' region motif. Position 613 (K613) interacts with ATP.

Belongs to the class-I aminoacyl-tRNA synthetase family.

The protein resides in the cytoplasm. The enzyme catalyses tRNA(Leu) + L-leucine + ATP = L-leucyl-tRNA(Leu) + AMP + diphosphate. This chain is Leucine--tRNA ligase, found in Streptococcus gordonii (strain Challis / ATCC 35105 / BCRC 15272 / CH1 / DL1 / V288).